The sequence spans 118 residues: Small ribosomal subunit protein uS13 (118 aa).

A disordered region spans residues 96–118 (PLRGQRTRTNARTRKGPRKAIKK).

Belongs to the universal ribosomal protein uS13 family. As to quaternary structure, part of the 30S ribosomal subunit. Forms a loose heterodimer with protein S19. Forms two bridges to the 50S subunit in the 70S ribosome.

Functionally, located at the top of the head of the 30S subunit, it contacts several helices of the 16S rRNA. In the 70S ribosome it contacts the 23S rRNA (bridge B1a) and protein L5 of the 50S subunit (bridge B1b), connecting the 2 subunits; these bridges are implicated in subunit movement. Contacts the tRNAs in the A and P-sites. The chain is Small ribosomal subunit protein uS13 from Stenotrophomonas maltophilia (strain K279a).